Consider the following 414-residue polypeptide: Glycogen synthase (414 aa).

The protein belongs to the glycosyltransferase group 1 family.

The enzyme catalyses [(1-&gt;4)-alpha-D-glucosyl](n) + UDP-alpha-D-glucose = [(1-&gt;4)-alpha-D-glucosyl](n+1) + UDP + H(+). The protein operates within glycan biosynthesis; glycogen biosynthesis. Glucosyltransferase that uses UDP-glucose as the sugar donor to elongate alpha-(1-&gt;4)-glucans. Is involved in the biosynthesis of both 6-O-methylglucosyl lipopolysaccharides (MGLP) and glycogen. May also use ADP-glucose as substrate. The protein is Glycogen synthase of Mycobacterium tuberculosis (strain CDC 1551 / Oshkosh).